Here is a 318-residue protein sequence, read N- to C-terminus: tRNA dimethylallyltransferase (318 aa).

9–16 (GATASGKT) serves as a coordination point for ATP. 11–16 (TASGKT) serves as a coordination point for substrate. Interaction with substrate tRNA stretches follow at residues 34–37 (DSAQ) and 158–162 (QRIIR).

This sequence belongs to the IPP transferase family. As to quaternary structure, monomer. Mg(2+) serves as cofactor.

The catalysed reaction is adenosine(37) in tRNA + dimethylallyl diphosphate = N(6)-dimethylallyladenosine(37) in tRNA + diphosphate. Its function is as follows. Catalyzes the transfer of a dimethylallyl group onto the adenine at position 37 in tRNAs that read codons beginning with uridine, leading to the formation of N6-(dimethylallyl)adenosine (i(6)A). The polypeptide is tRNA dimethylallyltransferase (Dichelobacter nodosus (strain VCS1703A)).